A 215-amino-acid chain; its full sequence is Adenylate kinase (215 aa).

10-15 (GAGKGT) contacts ATP. The interval 30–59 (STGDMLRAAIKAGTPLGLEAKKIIDEGGLV) is NMP. Residues T31, R36, 57–59 (GLV), 85–88 (GFPR), and Q92 each bind AMP. The tract at residues 122–159 (GRRVHLASGRTYHVTYNPPKVEGKDDVTGEDLIQRDDD) is LID. Residues R123 and 132 to 133 (TY) contribute to the ATP site. AMP contacts are provided by R156 and R167. Q200 contacts ATP.

It belongs to the adenylate kinase family. In terms of assembly, monomer.

The protein resides in the cytoplasm. It carries out the reaction AMP + ATP = 2 ADP. Its pathway is purine metabolism; AMP biosynthesis via salvage pathway; AMP from ADP: step 1/1. Catalyzes the reversible transfer of the terminal phosphate group between ATP and AMP. Plays an important role in cellular energy homeostasis and in adenine nucleotide metabolism. This is Adenylate kinase from Neisseria meningitidis serogroup C (strain 053442).